Consider the following 196-residue polypeptide: MTWQSDYSRDYEVKNHMECQNRSDKYIWSPHDAYFYKGLSELIVDIDRLIYLSLEKIRKDFVFINLNTDSLSEFINRDNEWLSAVKGKQVVLIAARKSEALANYWYYNSNIRGVVYAGLSRDIRKELAYVINGRFLRKDIKKDKITDREMEIIRMTAQGMQPKSIARIENCSVKTVYTHRRNAEAKLYSKIYKLVQ.

Positions 138–196 (KDIKKDKITDREMEIIRMTAQGMQPKSIARIENCSVKTVYTHRRNAEAKLYSKIYKLVQ) constitute an HTH luxR-type domain. A DNA-binding region (H-T-H motif) is located at residues 162–181 (PKSIARIENCSVKTVYTHRR).

Belongs to the EcpR/MatA family.

The protein localises to the cytoplasm. Functionally, part of the ecpRABCDE operon, which encodes the E.coli common pilus (ECP). ECP is found in both commensal and pathogenic strains and plays a dual role in early-stage biofilm development and host cell recognition. Positively regulates the expression of the ecp operon. The polypeptide is HTH-type transcriptional regulator EcpR (ecpR) (Escherichia coli (strain SE11)).